The following is a 92-amino-acid chain: Small ribosomal subunit protein uS19 (92 aa).

It belongs to the universal ribosomal protein uS19 family.

Its function is as follows. Protein S19 forms a complex with S13 that binds strongly to the 16S ribosomal RNA. This is Small ribosomal subunit protein uS19 from Acaryochloris marina (strain MBIC 11017).